The primary structure comprises 348 residues: 3-methyl-2-oxobutanoate dehydrogenase subunit beta (348 aa).

Residues Glu-51, 80–82 (LAE), Gln-104, and 108–111 (FSYP) contribute to the thiamine diphosphate site. Substrate-binding positions include 105 to 108 (FDGF) and His-151. His-151 acts as the Proton acceptor in catalysis.

Heteromer of E1 alpha (BkdA) and beta (BkdB) subunits. Part of the BCKADH complex, consisting of multiple copies of BkdA/BkdB (E1), BkdC (E2) and Lpd (E3). It depends on thiamine diphosphate as a cofactor.

The catalysed reaction is N(6)-[(R)-lipoyl]-L-lysyl-[protein] + 3-methyl-2-oxobutanoate + H(+) = N(6)-[(R)-S(8)-2-methylpropanoyldihydrolipoyl]-L-lysyl-[protein] + CO2. Component of the branched-chain alpha-ketoacid dehydrogenase (BCKADH) complex, that catalyzes the overall conversion of branched-chain alpha-ketoacids to acyl-CoA and CO(2). The polypeptide is 3-methyl-2-oxobutanoate dehydrogenase subunit beta (bkdB) (Mycobacterium tuberculosis (strain CDC 1551 / Oshkosh)).